The primary structure comprises 346 residues: Protein farnesyltransferase/geranylgeranyltransferase type-1 subunit alpha (346 aa).

PFTA repeat units follow at residues 59-93 (RSTR…ALGV), 94-128 (DLRE…KLGA), 130-164 (AVTN…ALGG), 165-198 (WEDE…RSPL), and 205-239 (MREL…NDTQ).

This sequence belongs to the protein prenyltransferase subunit alpha family. In terms of assembly, heterodimer of an alpha and a beta subunit. Mg(2+) serves as cofactor.

It catalyses the reaction L-cysteinyl-[protein] + (2E,6E)-farnesyl diphosphate = S-(2E,6E)-farnesyl-L-cysteinyl-[protein] + diphosphate. The enzyme catalyses geranylgeranyl diphosphate + L-cysteinyl-[protein] = S-geranylgeranyl-L-cysteinyl-[protein] + diphosphate. In terms of biological role, essential subunit of both the farnesyltransferase and the geranylgeranyltransferase complex. Contributes to the transfer of a farnesyl or geranylgeranyl moiety from farnesyl or geranylgeranyl diphosphate to a cysteine at the fourth position from the C-terminus of several proteins having the C-terminal sequence Cys-aliphatic-aliphatic-X. This is Protein farnesyltransferase/geranylgeranyltransferase type-1 subunit alpha (FTA) from Solanum lycopersicum (Tomato).